A 178-amino-acid polypeptide reads, in one-letter code: Acireductone dioxygenase (178 aa).

Positions 100, 102, 106, and 145 each coordinate Fe(2+). Ni(2+) is bound by residues histidine 100, histidine 102, glutamate 106, and histidine 145.

Belongs to the acireductone dioxygenase (ARD) family. Monomer. Fe(2+) is required as a cofactor. It depends on Ni(2+) as a cofactor.

It carries out the reaction 1,2-dihydroxy-5-(methylsulfanyl)pent-1-en-3-one + O2 = 3-(methylsulfanyl)propanoate + CO + formate + 2 H(+). It catalyses the reaction 1,2-dihydroxy-5-(methylsulfanyl)pent-1-en-3-one + O2 = 4-methylsulfanyl-2-oxobutanoate + formate + 2 H(+). Its pathway is amino-acid biosynthesis; L-methionine biosynthesis via salvage pathway; L-methionine from S-methyl-5-thio-alpha-D-ribose 1-phosphate: step 5/6. In terms of biological role, catalyzes 2 different reactions between oxygen and the acireductone 1,2-dihydroxy-3-keto-5-methylthiopentene (DHK-MTPene) depending upon the metal bound in the active site. Fe-containing acireductone dioxygenase (Fe-ARD) produces formate and 2-keto-4-methylthiobutyrate (KMTB), the alpha-ketoacid precursor of methionine in the methionine recycle pathway. Ni-containing acireductone dioxygenase (Ni-ARD) produces methylthiopropionate, carbon monoxide and formate, and does not lie on the methionine recycle pathway. In Bacillus velezensis (strain DSM 23117 / BGSC 10A6 / LMG 26770 / FZB42) (Bacillus amyloliquefaciens subsp. plantarum), this protein is Acireductone dioxygenase.